The sequence spans 105 residues: Small ribosomal subunit protein uS10 (105 aa).

This sequence belongs to the universal ribosomal protein uS10 family. As to quaternary structure, part of the 30S ribosomal subunit.

In terms of biological role, involved in the binding of tRNA to the ribosomes. In Anaplasma marginale (strain Florida), this protein is Small ribosomal subunit protein uS10.